Here is a 214-residue protein sequence, read N- to C-terminus: Homeobox protein HEX homolog pha-2 (214 aa).

Disordered stretches follow at residues 1-50 (MDQK…QKME) and 180-214 (RRVR…LSHG). Residues 24–34 (SSESPIPTGSE) are compositionally biased toward low complexity. Residues 35–44 (CSLNESSDTT) are compositionally biased toward polar residues. Residues 124–183 (RKGGQIRFTNEQTDALEHKFDSHKYLSPQERKKLAKSLSLSERQVKTWFQNRRAKWRRVR) constitute a DNA-binding region (homeobox). Polar residues predominate over residues 200-214 (SLGQLQSSNPFLSHG).

Its subcellular location is the nucleus. In terms of biological role, transcriptional repressor. Involved in pharyngeal development and required for the formation of the pharyngeal isthmus. Plays a role in modulating cytoskeleton in the muscle cells of the isthmus. Regulates expression of the acetylcholinesterase genes ace-1 and ace-2. May regulate its own expression. This is Homeobox protein HEX homolog pha-2 from Caenorhabditis elegans.